The sequence spans 102 residues: Fe-S protein maturation auxiliary factor YitW (102 aa).

It belongs to the MIP18 family.

Involved in the maturation of iron-sulfur (Fe-S) proteins. May function as a Fe-S cluster carrier. This chain is Fe-S protein maturation auxiliary factor YitW (yitW), found in Bacillus subtilis (strain 168).